We begin with the raw amino-acid sequence, 351 residues long: UDP-glucose 4-epimerase 5 (351 aa).

Residues 13–15 (GYI), 34–38 (DNLDN), 64–65 (DL), F86, and K90 each bind NAD(+). Residue 130–132 (SAT) participates in substrate binding. The active-site Proton acceptor is the Y154. Positions 158 and 182 each coordinate NAD(+). Substrate contacts are provided by residues 182–184 (YFN), 203–205 (NNL), 221–223 (TVF), R236, and 298–301 (RPGD).

Belongs to the NAD(P)-dependent epimerase/dehydratase family. As to quaternary structure, forms homodimers and heterodimers. NAD(+) is required as a cofactor. As to expression, widely expressed.

The catalysed reaction is UDP-alpha-D-glucose = UDP-alpha-D-galactose. The protein operates within carbohydrate metabolism; galactose metabolism. Enhanced activity by NaCl. Inhibited by UDP. Its function is as follows. Catalyzes the interconversion between UDP-glucose and UDP-galactose. This chain is UDP-glucose 4-epimerase 5, found in Arabidopsis thaliana (Mouse-ear cress).